Here is a 1040-residue protein sequence, read N- to C-terminus: DNA mismatch repair protein MutS (1040 aa).

The segment covering 1–10 (MPVKPSAQNN) has biased composition (polar residues). Disordered stretches follow at residues 1–22 (MPVK…SVPV) and 130–157 (ATGT…SKST). The span at 11-22 (SPSKPTSKSVPV) shows a compositional bias: low complexity. A compositionally biased stretch (polar residues) spans 130–143 (ATGTDNANNPSNAP). 759–766 (GPNMGGKS) is a binding site for ATP.

The protein belongs to the DNA mismatch repair MutS family.

Its function is as follows. This protein is involved in the repair of mismatches in DNA. It is possible that it carries out the mismatch recognition step. This protein has a weak ATPase activity. This chain is DNA mismatch repair protein MutS, found in Psychrobacter cryohalolentis (strain ATCC BAA-1226 / DSM 17306 / VKM B-2378 / K5).